Reading from the N-terminus, the 845-residue chain is uncharacterized protein (845 aa).

Residues 224 to 241 (SNNIPTGIQDSSKYTVNG) show a composition bias toward polar residues. 7 disordered regions span residues 224–244 (SNNI…GPTE), 324–346 (QGTE…ANNG), 383–434 (RTAN…EGSA), 456–485 (VKAS…ATLN), 519–619 (NMTL…PKNS), 674–701 (VVSR…DSSP), and 739–785 (RKST…ANKS). The span at 390–399 (PTKKSNRSEQ) shows a compositional bias: basic and acidic residues. Over residues 400 to 422 (SKTVANTNVGSKNGTTPRSFAQK) the composition is skewed to polar residues. The span at 534–546 (NSWRSKYLSEGKN) shows a compositional bias: basic and acidic residues. Low complexity predominate over residues 563-576 (SSLASPTKSSASPL). Phosphoserine is present on S567. Basic and acidic residues-rich tracts occupy residues 579 to 588 (APKETPERLC) and 600 to 614 (ANLK…KSDI). Polar residues-rich tracts occupy residues 674 to 683 (VVSRTVTSPK), 691 to 701 (SKASYNQDSSP), and 743 to 760 (ADSL…TPKA).

Its subcellular location is the mitochondrion. This is an uncharacterized protein from Schizosaccharomyces pombe (strain 972 / ATCC 24843) (Fission yeast).